The primary structure comprises 144 residues: Flagellar assembly factor FliW (144 aa).

This sequence belongs to the FliW family. Interacts with translational regulator CsrA and flagellin(s).

The protein localises to the cytoplasm. In terms of biological role, acts as an anti-CsrA protein, binds CsrA and prevents it from repressing translation of its target genes, one of which is flagellin. Binds to flagellin and participates in the assembly of the flagellum. This chain is Flagellar assembly factor FliW, found in Geobacillus sp. (strain WCH70).